We begin with the raw amino-acid sequence, 201 residues long: Histidine biosynthesis bifunctional protein HisIE (201 aa).

Residues 1–114 (MLTAQQIEKL…FAPAQTEWGF (114 aa)) form a phosphoribosyl-AMP cyclohydrolase region. Residues 115–201 (LYQLEKLLAS…SCVIRRLRER (87 aa)) are phosphoribosyl-ATP pyrophosphohydrolase.

This sequence in the N-terminal section; belongs to the PRA-CH family. The protein in the C-terminal section; belongs to the PRA-PH family.

It is found in the cytoplasm. It carries out the reaction 1-(5-phospho-beta-D-ribosyl)-ATP + H2O = 1-(5-phospho-beta-D-ribosyl)-5'-AMP + diphosphate + H(+). The catalysed reaction is 1-(5-phospho-beta-D-ribosyl)-5'-AMP + H2O = 1-(5-phospho-beta-D-ribosyl)-5-[(5-phospho-beta-D-ribosylamino)methylideneamino]imidazole-4-carboxamide. Its pathway is amino-acid biosynthesis; L-histidine biosynthesis; L-histidine from 5-phospho-alpha-D-ribose 1-diphosphate: step 2/9. It participates in amino-acid biosynthesis; L-histidine biosynthesis; L-histidine from 5-phospho-alpha-D-ribose 1-diphosphate: step 3/9. The chain is Histidine biosynthesis bifunctional protein HisIE from Photorhabdus laumondii subsp. laumondii (strain DSM 15139 / CIP 105565 / TT01) (Photorhabdus luminescens subsp. laumondii).